Reading from the N-terminus, the 403-residue chain is S-adenosylmethionine synthase (403 aa).

H15 serves as a coordination point for ATP. D17 contacts Mg(2+). A K(+)-binding site is contributed by E43. 2 residues coordinate L-methionine: E56 and Q99. The tract at residues 99-109 (QSPDINQGVDR) is flexible loop. ATP contacts are provided by residues 166 to 168 (DAK), 232 to 233 (KF), D241, 247 to 248 (RK), A264, and K268. D241 is a binding site for L-methionine. K272 lines the L-methionine pocket.

Belongs to the AdoMet synthase family. As to quaternary structure, homotetramer; dimer of dimers. Requires Mg(2+) as cofactor. K(+) serves as cofactor.

It is found in the cytoplasm. It carries out the reaction L-methionine + ATP + H2O = S-adenosyl-L-methionine + phosphate + diphosphate. It functions in the pathway amino-acid biosynthesis; S-adenosyl-L-methionine biosynthesis; S-adenosyl-L-methionine from L-methionine: step 1/1. Its function is as follows. Catalyzes the formation of S-adenosylmethionine (AdoMet) from methionine and ATP. The overall synthetic reaction is composed of two sequential steps, AdoMet formation and the subsequent tripolyphosphate hydrolysis which occurs prior to release of AdoMet from the enzyme. The sequence is that of S-adenosylmethionine synthase from Xylella fastidiosa (strain M12).